The sequence spans 501 residues: Melianol synthase CYP71BQ5 (501 aa).

Residues 1 to 21 (MEFRLPVLLSFLLFFLMLVRH) form a helical membrane-spanning segment. Cysteine 439 is a binding site for heme.

It belongs to the cytochrome P450 family. Heme serves as cofactor. As to expression, mainly expressed in petioles and roots, and, to a lower extent, in leaves.

The protein resides in the membrane. The catalysed reaction is dihydroniloticin + 2 reduced [NADPH--hemoprotein reductase] + 2 O2 = melianol + 2 oxidized [NADPH--hemoprotein reductase] + 3 H2O + 2 H(+). The protein operates within secondary metabolite biosynthesis; terpenoid biosynthesis. In terms of biological role, monooxygenase involved in the biosynthesis of limonoids triterpene natural products such as azadirachtin, an antifeedant widely used as bioinsecticide, and possessing many medicinal applications including anti-tumoral, anti-malarial, anti-rheumatic, antibacterial, anti-inflammatory, anti-pyretic and diuretic effects. Catalyzes the conversion of dihydroniloticin to the protolimonoid melianol. The protein is Melianol synthase CYP71BQ5 of Melia azedarach (Chinaberry tree).